A 291-amino-acid polypeptide reads, in one-letter code: U3 small nucleolar ribonucleoprotein protein IMP4 (291 aa).

The Brix domain occupies 83–264 (PKVMITTSRD…LYMIRLGTLE (182 aa)).

In terms of assembly, part of the small subunit (SSU) processome, composed of more than 70 proteins and the RNA chaperone small nucleolar RNA (snoRNA) U3. Component of a heterotrimeric complex containing IMP3, IMP4 and MPHOSPH10. Interacts with MPHOSPH10.

Its subcellular location is the nucleus. It localises to the nucleolus. Its function is as follows. Component of the 60-80S U3 small nucleolar ribonucleoprotein (U3 snoRNP). Required for the early cleavages during pre-18S ribosomal RNA processing. Part of the small subunit (SSU) processome, first precursor of the small eukaryotic ribosomal subunit. During the assembly of the SSU processome in the nucleolus, many ribosome biogenesis factors, an RNA chaperone and ribosomal proteins associate with the nascent pre-rRNA and work in concert to generate RNA folding, modifications, rearrangements and cleavage as well as targeted degradation of pre-ribosomal RNA by the RNA exosome. This is U3 small nucleolar ribonucleoprotein protein IMP4 from Homo sapiens (Human).